The following is a 226-amino-acid chain: Urease accessory protein UreF (226 aa).

The protein belongs to the UreF family. In terms of assembly, ureD, UreF and UreG form a complex that acts as a GTP-hydrolysis-dependent molecular chaperone, activating the urease apoprotein by helping to assemble the nickel containing metallocenter of UreC. The UreE protein probably delivers the nickel.

It is found in the cytoplasm. Functionally, required for maturation of urease via the functional incorporation of the urease nickel metallocenter. The polypeptide is Urease accessory protein UreF (Burkholderia cenocepacia (strain ATCC BAA-245 / DSM 16553 / LMG 16656 / NCTC 13227 / J2315 / CF5610) (Burkholderia cepacia (strain J2315))).